Reading from the N-terminus, the 282-residue chain is Ribosome biogenesis GTPase A (282 aa).

In terms of domain architecture, CP-type G spans 14–178 (RREVTEKLKL…LLDTPGILWP (165 aa)). GTP contacts are provided by residues 58–61 (NKAD), 86–87 (NS), 130–135 (NVGKST), and Gly-174.

It belongs to the TRAFAC class YlqF/YawG GTPase family. MTG1 subfamily. As to quaternary structure, interacts with ctc. Interacts with the immature 50S ribosome subunit. 2 molecules of rbgA bind to one 50S subunit.

Its subcellular location is the cytoplasm. Essential protein that is required for a late step of 50S ribosomal subunit assembly. Has GTPase activity that is stimulated by interaction with the immature 50S ribosome subunit. Binds to the 23S rRNA. Required for the association of ribosomal proteins rplP and rpmA with the large subunit. This chain is Ribosome biogenesis GTPase A (rbgA), found in Bacillus spizizenii (strain ATCC 23059 / NRRL B-14472 / W23) (Bacillus subtilis subsp. spizizenii).